Consider the following 327-residue polypeptide: uncharacterized protein (327 aa).

4 helical membrane-spanning segments follow: residues serine 68–proline 88, phenylalanine 92–phenylalanine 112, tryptophan 127–alanine 147, and isoleucine 148–leucine 168.

Its subcellular location is the cell membrane. May act as a negative regulator for the transcription of mutY, fabL, sspE and yfhP. This is an uncharacterized protein from Bacillus subtilis (strain 168).